Consider the following 305-residue polypeptide: PI protein (305 aa).

The protein belongs to the initiator RepB protein family. Homodimer.

In terms of biological role, initiation for plasmid R6K DNA replication. The protein is PI protein (pir) of Escherichia coli.